Reading from the N-terminus, the 208-residue chain is N-(5'-phosphoribosyl)anthranilate isomerase (208 aa).

Belongs to the TrpF family.

The catalysed reaction is N-(5-phospho-beta-D-ribosyl)anthranilate = 1-(2-carboxyphenylamino)-1-deoxy-D-ribulose 5-phosphate. It participates in amino-acid biosynthesis; L-tryptophan biosynthesis; L-tryptophan from chorismate: step 3/5. The polypeptide is N-(5'-phosphoribosyl)anthranilate isomerase (trpF) (Pyrobaculum aerophilum (strain ATCC 51768 / DSM 7523 / JCM 9630 / CIP 104966 / NBRC 100827 / IM2)).